We begin with the raw amino-acid sequence, 443 residues long: Probable D-serine dehydratase (443 aa).

At K118 the chain carries N6-(pyridoxal phosphate)lysine.

The protein belongs to the serine/threonine dehydratase family. DsdA subfamily. The cofactor is pyridoxal 5'-phosphate.

It carries out the reaction D-serine = pyruvate + NH4(+). The polypeptide is Probable D-serine dehydratase (Vibrio parahaemolyticus serotype O3:K6 (strain RIMD 2210633)).